The chain runs to 489 residues: Endoglucanase 4 (489 aa).

The signal sequence occupies residues 1–25 (MAGKSFMTPAIMLAMLLLISPETYA). Aspartate 81 acts as the Nucleophile in catalysis. Histidine 409 is a catalytic residue. Residue asparagine 453 is glycosylated (N-linked (GlcNAc...) asparagine). Catalysis depends on residues aspartate 460 and glutamate 469.

The protein belongs to the glycosyl hydrolase 9 (cellulase E) family.

The protein resides in the secreted. The enzyme catalyses Endohydrolysis of (1-&gt;4)-beta-D-glucosidic linkages in cellulose, lichenin and cereal beta-D-glucans.. The chain is Endoglucanase 4 from Arabidopsis thaliana (Mouse-ear cress).